Here is a 74-residue protein sequence, read N- to C-terminus: Cytochrome c oxidase assembly factor 5 (74 aa).

The CHCH domain occupies 27-65 (QSDCVVQEGKSPRQCLKEGYCNSLKYAFFECKRSVLDNR). A Cx10C motif motif is present at residues 30-41 (CVVQEGKSPRQC). Intrachain disulfides connect cysteine 30/cysteine 57 and cysteine 41/cysteine 47. Residue serine 37 is modified to Phosphoserine. The Cx9C motif motif lies at 47–57 (CNSLKYAFFEC).

This sequence belongs to the PET191 family.

Its function is as follows. Involved in an early step of the mitochondrial complex IV assembly process. The sequence is that of Cytochrome c oxidase assembly factor 5 (COA5) from Homo sapiens (Human).